The chain runs to 270 residues: Metallo-beta-lactamase type 2 (270 aa).

A signal peptide spans 1–28 (MELPNIMHPVAKLSTALAAALMLSGCMP). His120, His122, Asp124, His189, and Cys208 together coordinate Zn(2+). 2 residues coordinate substrate: Lys211 and Asn220. His250 lines the Zn(2+) pocket.

This sequence belongs to the metallo-beta-lactamase superfamily. Class-B beta-lactamase family. Monomer. Zn(2+) serves as cofactor.

The protein localises to the periplasm. It carries out the reaction a beta-lactam + H2O = a substituted beta-amino acid. With respect to regulation, inhibits by captopril, thiorphan, dimercaprol and tiopronin. This enzyme is not susceptible to inactivation by the beta-lactamase-blocking agents clavulanic acid. Its function is as follows. Confers resistance to the different beta-lactams antibiotics (penicillin, cephalosporin and carbapenem) via the hydrolysis of the beta-lactam ring. Does not confer resistance to the polymixin colistin or the fluoroquinolone ciprofloxacin. This is Metallo-beta-lactamase type 2 from Klebsiella pneumoniae.